We begin with the raw amino-acid sequence, 46 residues long: Iota-conotoxin-like r11b (46 aa).

A 4-hydroxyproline mark is found at Pro-2 and Pro-11. 4 cysteine pairs are disulfide-bonded: Cys-5–Cys-19, Cys-12–Cys-22, Cys-18–Cys-27, and Cys-21–Cys-38. 4-hydroxyproline is present on Pro-29. Position 44 is a D-phenylalanine (Phe-44).

Post-translationally, the natural D-Phe form of the peptide is more potent than the synthetic L-Phe form. As to expression, expressed by the venom duct.

It is found in the secreted. Iota-conotoxins bind to voltage-gated sodium channels (Nav) and act as agonists by shifting the voltage-dependence of activation to more hyperpolarized levels. Produces excitatory symptoms when injected intracranially into mice and is lethal at higher doses. Exposure to frog cutaneous pectoris induces spontaneous and repetitive action potentials. This effect is slowly reversible. Natural peptide (with D-Phe) is active on nerve, but not on muscle. Synthetic peptide (with L-Phe) is not active on both nerve and muscle. The sequence is that of Iota-conotoxin-like r11b from Conus radiatus (Rayed cone).